Here is a 380-residue protein sequence, read N- to C-terminus: Queuine tRNA-ribosyltransferase (380 aa).

Asp96 serves as the catalytic Proton acceptor. Residues 96 to 100 (DSGGF), Asp150, Gln193, and Gly220 contribute to the substrate site. The tract at residues 251 to 257 (GVGAPDS) is RNA binding. Catalysis depends on Asp270, which acts as the Nucleophile. The interval 275–279 (TRIAR) is RNA binding; important for wobble base 34 recognition. 4 residues coordinate Zn(2+): Cys308, Cys310, Cys313, and His339.

Belongs to the queuine tRNA-ribosyltransferase family. As to quaternary structure, homodimer. Within each dimer, one monomer is responsible for RNA recognition and catalysis, while the other monomer binds to the replacement base PreQ1. The cofactor is Zn(2+).

It catalyses the reaction 7-aminomethyl-7-carbaguanine + guanosine(34) in tRNA = 7-aminomethyl-7-carbaguanosine(34) in tRNA + guanine. The protein operates within tRNA modification; tRNA-queuosine biosynthesis. Catalyzes the base-exchange of a guanine (G) residue with the queuine precursor 7-aminomethyl-7-deazaguanine (PreQ1) at position 34 (anticodon wobble position) in tRNAs with GU(N) anticodons (tRNA-Asp, -Asn, -His and -Tyr). Catalysis occurs through a double-displacement mechanism. The nucleophile active site attacks the C1' of nucleotide 34 to detach the guanine base from the RNA, forming a covalent enzyme-RNA intermediate. The proton acceptor active site deprotonates the incoming PreQ1, allowing a nucleophilic attack on the C1' of the ribose to form the product. After dissociation, two additional enzymatic reactions on the tRNA convert PreQ1 to queuine (Q), resulting in the hypermodified nucleoside queuosine (7-(((4,5-cis-dihydroxy-2-cyclopenten-1-yl)amino)methyl)-7-deazaguanosine). This is Queuine tRNA-ribosyltransferase from Streptococcus pneumoniae (strain ATCC BAA-255 / R6).